Here is a 37-residue protein sequence, read N- to C-terminus: Large ribosomal subunit protein bL36c (37 aa).

This sequence belongs to the bacterial ribosomal protein bL36 family.

It localises to the plastid. The protein localises to the chloroplast. This Cyanidioschyzon merolae (strain NIES-3377 / 10D) (Unicellular red alga) protein is Large ribosomal subunit protein bL36c.